Here is a 208-residue protein sequence, read N- to C-terminus: MTNPHADRLIAFLISSGISDQRVLDAIYRLPRESFVSQAMMHQAYDNNALPIGQGQTISQPYIVAKMTELLDLKSDSNVLEIGTGSGYQTAVLAQIVDHVYSVERIKSLQWDAKRRLKQLDIYNVSTKHGDGWLGWEAKGPFDAIIVTAAAESVPQALLSQLKEGGKMIIPVGEEEQQLLKIERQGEQYLSTVVEMVRFVPLVAGDLA.

Residue serine 59 is part of the active site.

The protein belongs to the methyltransferase superfamily. L-isoaspartyl/D-aspartyl protein methyltransferase family.

The protein localises to the cytoplasm. It catalyses the reaction [protein]-L-isoaspartate + S-adenosyl-L-methionine = [protein]-L-isoaspartate alpha-methyl ester + S-adenosyl-L-homocysteine. Functionally, catalyzes the methyl esterification of L-isoaspartyl residues in peptides and proteins that result from spontaneous decomposition of normal L-aspartyl and L-asparaginyl residues. It plays a role in the repair and/or degradation of damaged proteins. This Vibrio campbellii (strain ATCC BAA-1116) protein is Protein-L-isoaspartate O-methyltransferase.